The primary structure comprises 201 residues: Large ribosomal subunit protein uL4 (201 aa).

The interval 45–66 is disordered; the sequence is AQLTRSEVSGGGKKPWRQKGTG.

The protein belongs to the universal ribosomal protein uL4 family. As to quaternary structure, part of the 50S ribosomal subunit.

One of the primary rRNA binding proteins, this protein initially binds near the 5'-end of the 23S rRNA. It is important during the early stages of 50S assembly. It makes multiple contacts with different domains of the 23S rRNA in the assembled 50S subunit and ribosome. Functionally, forms part of the polypeptide exit tunnel. The sequence is that of Large ribosomal subunit protein uL4 from Aeromonas hydrophila subsp. hydrophila (strain ATCC 7966 / DSM 30187 / BCRC 13018 / CCUG 14551 / JCM 1027 / KCTC 2358 / NCIMB 9240 / NCTC 8049).